The following is a 110-amino-acid chain: MGGKKKPTLSQLAKKAEKEKAQQAQKAKKEVKKEETPAKRTIQVLDEKVFQAIAKEVQNMRVITPYEIASKYGIKMSVAFKVLRNLKERGDLVLVAKGHRTEIYVPAKRS.

The disordered stretch occupies residues 1–38 (MGGKKKPTLSQLAKKAEKEKAQQAQKAKKEVKKEETPA). Residues 14-38 (KKAEKEKAQQAQKAKKEVKKEETPA) are compositionally biased toward basic and acidic residues.

This sequence belongs to the eukaryotic ribosomal protein eS25 family.

This Pyrobaculum aerophilum (strain ATCC 51768 / DSM 7523 / JCM 9630 / CIP 104966 / NBRC 100827 / IM2) protein is Small ribosomal subunit protein eS25 (rps25e).